We begin with the raw amino-acid sequence, 391 residues long: Methylthioribose-1-phosphate isomerase (391 aa).

Catalysis depends on Asp-267, which acts as the Proton donor.

Belongs to the eIF-2B alpha/beta/delta subunits family. MtnA subfamily.

It is found in the cytoplasm. The protein localises to the nucleus. It carries out the reaction 5-(methylsulfanyl)-alpha-D-ribose 1-phosphate = 5-(methylsulfanyl)-D-ribulose 1-phosphate. It participates in amino-acid biosynthesis; L-methionine biosynthesis via salvage pathway; L-methionine from S-methyl-5-thio-alpha-D-ribose 1-phosphate: step 1/6. Functionally, catalyzes the interconversion of methylthioribose-1-phosphate (MTR-1-P) into methylthioribulose-1-phosphate (MTRu-1-P). The protein is Methylthioribose-1-phosphate isomerase of Ajellomyces capsulatus (strain NAm1 / WU24) (Darling's disease fungus).